Reading from the N-terminus, the 179-residue chain is Large ribosomal subunit protein uL5 (179 aa).

This sequence belongs to the universal ribosomal protein uL5 family. As to quaternary structure, part of the 50S ribosomal subunit; part of the 5S rRNA/L5/L18/L25 subcomplex. Contacts the 5S rRNA and the P site tRNA. Forms a bridge to the 30S subunit in the 70S ribosome.

In terms of biological role, this is one of the proteins that bind and probably mediate the attachment of the 5S RNA into the large ribosomal subunit, where it forms part of the central protuberance. In the 70S ribosome it contacts protein S13 of the 30S subunit (bridge B1b), connecting the 2 subunits; this bridge is implicated in subunit movement. Contacts the P site tRNA; the 5S rRNA and some of its associated proteins might help stabilize positioning of ribosome-bound tRNAs. In Enterobacter sp. (strain 638), this protein is Large ribosomal subunit protein uL5.